The chain runs to 351 residues: Inhibin beta C chain (351 aa).

The N-terminal stretch at 1–18 is a signal peptide; that stretch reads MASSLLLALLFLTLATVV. Residues 19–236 constitute a propeptide that is removed on maturation; sequence NLKTDGPCPA…EGKHRVRRRG (218 aa). Residues N110, N142, and N160 are each glycosylated (N-linked (GlcNAc...) asparagine). Cystine bridges form between C239–C247, C246–C316, C275–C348, and C279–C350.

The protein belongs to the TGF-beta family. As to quaternary structure, homodimeric or heterodimeric through association with alpha and beta subunits, linked by one or more disulfide bonds. Inhibins are heterodimers of one alpha and one beta subunit. Activins are homo- or heterodimers of beta subunits only.

It localises to the secreted. In terms of biological role, inhibins and activins inhibit and activate, respectively, the secretion of follitropin by the pituitary gland. Inhibins/activins are involved in regulating a number of diverse functions such as hypothalamic and pituitary hormone secretion, gonadal hormone secretion, germ cell development and maturation, erythroid differentiation, insulin secretion, nerve cell survival, embryonic axial development or bone growth, depending on their subunit composition. Inhibins appear to oppose the functions of activins. This chain is Inhibin beta C chain (Inhbc), found in Rattus norvegicus (Rat).